The primary structure comprises 146 residues: Cytochrome c-type biogenesis protein CcmE (146 aa).

The Cytoplasmic segment spans residues 1–8 (MNPRRKKR). Residues 9-29 (LGLILALVLGASATVGLMLYA) traverse the membrane as a helical; Signal-anchor for type II membrane protein segment. The Periplasmic segment spans residues 30-146 (LNQNMDLFYT…EVAEAMKKTH (117 aa)). Positions 129 and 133 each coordinate heme.

The protein belongs to the CcmE/CycJ family.

The protein resides in the cell inner membrane. Its function is as follows. Heme chaperone required for the biogenesis of c-type cytochromes. Transiently binds heme delivered by CcmC and transfers the heme to apo-cytochromes in a process facilitated by CcmF and CcmH. This Aliivibrio salmonicida (strain LFI1238) (Vibrio salmonicida (strain LFI1238)) protein is Cytochrome c-type biogenesis protein CcmE.